A 175-amino-acid chain; its full sequence is Translation initiation factor IF-3, chloroplastic (175 aa).

This sequence belongs to the IF-3 family. In terms of assembly, monomer.

It localises to the plastid. It is found in the chloroplast. IF-3 binds to the 30S ribosomal subunit and shifts the equilibrium between 70S ribosomes and their 50S and 30S subunits in favor of the free subunits, thus enhancing the availability of 30S subunits on which protein synthesis initiation begins. This Cyanidioschyzon merolae (strain NIES-3377 / 10D) (Unicellular red alga) protein is Translation initiation factor IF-3, chloroplastic.